Here is a 562-residue protein sequence, read N- to C-terminus: T-complex protein 1 subunit epsilon (562 aa).

The protein belongs to the TCP-1 chaperonin family. In terms of assembly, heterooligomeric complex of about 850 to 900 kDa that forms two stacked rings, 12 to 16 nm in diameter.

It localises to the cytoplasm. Molecular chaperone; assists the folding of proteins upon ATP hydrolysis. Known to play a role, in vitro, in the folding of actin and tubulin. In yeast may play a role in mitotic spindle formation. This chain is T-complex protein 1 subunit epsilon (CCT5), found in Saccharomyces cerevisiae (strain ATCC 204508 / S288c) (Baker's yeast).